A 257-amino-acid chain; its full sequence is Deoxyribose-phosphate aldolase (257 aa).

D102 functions as the Proton donor/acceptor in the catalytic mechanism. The active-site Schiff-base intermediate with acetaldehyde is K166. K198 functions as the Proton donor/acceptor in the catalytic mechanism.

The protein belongs to the DeoC/FbaB aldolase family. DeoC type 2 subfamily.

It is found in the cytoplasm. The enzyme catalyses 2-deoxy-D-ribose 5-phosphate = D-glyceraldehyde 3-phosphate + acetaldehyde. It functions in the pathway carbohydrate degradation; 2-deoxy-D-ribose 1-phosphate degradation; D-glyceraldehyde 3-phosphate and acetaldehyde from 2-deoxy-alpha-D-ribose 1-phosphate: step 2/2. Its function is as follows. Catalyzes a reversible aldol reaction between acetaldehyde and D-glyceraldehyde 3-phosphate to generate 2-deoxy-D-ribose 5-phosphate. This chain is Deoxyribose-phosphate aldolase, found in Shewanella frigidimarina (strain NCIMB 400).